A 104-amino-acid chain; its full sequence is Nucleoid-associated protein GAU_1113 (104 aa).

This sequence belongs to the YbaB/EbfC family. As to quaternary structure, homodimer.

The protein localises to the cytoplasm. It localises to the nucleoid. Binds to DNA and alters its conformation. May be involved in regulation of gene expression, nucleoid organization and DNA protection. The protein is Nucleoid-associated protein GAU_1113 of Gemmatimonas aurantiaca (strain DSM 14586 / JCM 11422 / NBRC 100505 / T-27).